A 383-amino-acid chain; its full sequence is 8-amino-7-oxononanoate synthase (383 aa).

A substrate-binding site is contributed by Arg21. 108 to 109 (GY) contacts pyridoxal 5'-phosphate. His133 contacts substrate. Residues Ser179, His207, and Thr233 each coordinate pyridoxal 5'-phosphate. Lys236 is modified (N6-(pyridoxal phosphate)lysine). Residue Thr350 coordinates substrate.

This sequence belongs to the class-II pyridoxal-phosphate-dependent aminotransferase family. BioF subfamily. Homodimer. The cofactor is pyridoxal 5'-phosphate.

The catalysed reaction is 6-carboxyhexanoyl-[ACP] + L-alanine + H(+) = (8S)-8-amino-7-oxononanoate + holo-[ACP] + CO2. The protein operates within cofactor biosynthesis; biotin biosynthesis. Functionally, catalyzes the decarboxylative condensation of pimeloyl-[acyl-carrier protein] and L-alanine to produce 8-amino-7-oxononanoate (AON), [acyl-carrier protein], and carbon dioxide. The sequence is that of 8-amino-7-oxononanoate synthase from Photorhabdus laumondii subsp. laumondii (strain DSM 15139 / CIP 105565 / TT01) (Photorhabdus luminescens subsp. laumondii).